A 407-amino-acid polypeptide reads, in one-letter code: Imidazolonepropionase (407 aa).

Residues His-74 and His-76 each coordinate Fe(3+). Zn(2+) is bound by residues His-74 and His-76. Positions 83, 146, and 179 each coordinate 4-imidazolone-5-propanoate. Tyr-146 lines the N-formimidoyl-L-glutamate pocket. Residue His-244 participates in Fe(3+) binding. His-244 is a Zn(2+) binding site. A 4-imidazolone-5-propanoate-binding site is contributed by Gln-247. Residue Asp-319 coordinates Fe(3+). Asp-319 lines the Zn(2+) pocket. Asn-321 and Gly-323 together coordinate N-formimidoyl-L-glutamate. Position 324 (Thr-324) interacts with 4-imidazolone-5-propanoate.

It belongs to the metallo-dependent hydrolases superfamily. HutI family. Zn(2+) is required as a cofactor. Requires Fe(3+) as cofactor.

The protein localises to the cytoplasm. The enzyme catalyses 4-imidazolone-5-propanoate + H2O = N-formimidoyl-L-glutamate. Its pathway is amino-acid degradation; L-histidine degradation into L-glutamate; N-formimidoyl-L-glutamate from L-histidine: step 3/3. Functionally, catalyzes the hydrolytic cleavage of the carbon-nitrogen bond in imidazolone-5-propanoate to yield N-formimidoyl-L-glutamate. It is the third step in the universal histidine degradation pathway. This is Imidazolonepropionase from Salmonella paratyphi A (strain ATCC 9150 / SARB42).